Consider the following 415-residue polypeptide: Glutamyl-tRNA reductase (415 aa).

Substrate is bound by residues 49–52 (TCNR), Ser-104, 109–111 (EPQ), and Gln-115. Catalysis depends on Cys-50, which acts as the Nucleophile. 184-189 (GAGEMI) provides a ligand contact to NADP(+).

It belongs to the glutamyl-tRNA reductase family. Homodimer.

The enzyme catalyses (S)-4-amino-5-oxopentanoate + tRNA(Glu) + NADP(+) = L-glutamyl-tRNA(Glu) + NADPH + H(+). It functions in the pathway porphyrin-containing compound metabolism; protoporphyrin-IX biosynthesis; 5-aminolevulinate from L-glutamyl-tRNA(Glu): step 1/2. Catalyzes the NADPH-dependent reduction of glutamyl-tRNA(Glu) to glutamate 1-semialdehyde (GSA). The polypeptide is Glutamyl-tRNA reductase (Neisseria meningitidis serogroup B (strain ATCC BAA-335 / MC58)).